A 633-amino-acid chain; its full sequence is DNA mismatch repair protein MutL (633 aa).

It belongs to the DNA mismatch repair MutL/HexB family.

This protein is involved in the repair of mismatches in DNA. It is required for dam-dependent methyl-directed DNA mismatch repair. May act as a 'molecular matchmaker', a protein that promotes the formation of a stable complex between two or more DNA-binding proteins in an ATP-dependent manner without itself being part of a final effector complex. The chain is DNA mismatch repair protein MutL from Macrococcus caseolyticus (strain JCSC5402) (Macrococcoides caseolyticum).